Here is a 242-residue protein sequence, read N- to C-terminus: Lysosomal membrane ascorbate-dependent ferrireductase CYB561A3 (242 aa).

Over 1-7 (MVSGRFY) the chain is Cytoplasmic. A helical membrane pass occupies residues 8–28 (LSCLLLGSLGSMCILFTIYWM). One can recognise a Cytochrome b561 domain in the interval 12-219 (LLGSLGSMCI…FGLLVLYILL (208 aa)). The Lumenal segment spans residues 29-45 (QYWRGGFAWNGSIYMFN). Asparagine 38 carries N-linked (GlcNAc...) asparagine glycosylation. Residues 46 to 66 (WHPVLMVAGMVVFYGGASLVY) traverse the membrane as a helical segment. 2 residues coordinate heme b: histidine 47 and arginine 67. The Cytoplasmic segment spans residues 67-83 (RLPQSWVGPKLPWKLLH). Residues lysine 76 and lysine 80 each coordinate L-ascorbate. Heme b is bound at residue histidine 83. A helical membrane pass occupies residues 84-104 (AALHLMAFVLTVVGLVAVFTF). Topologically, residues 105–119 (HNHGRTANLYSLHSW) are lumenal. Heme b contacts are provided by residues 112–115 (NLYS) and histidine 117. Residues 120–140 (LGITTVFLFACQWFLGFAVFL) traverse the membrane as a helical segment. The Cytoplasmic portion of the chain corresponds to 141 to 154 (LPWASMWLRSLLKP). Residue arginine 149 coordinates L-ascorbate. The chain crosses the membrane as a helical span at residues 155-175 (IHVFFGAAILSLSIASVISGI). Positions 156 and 177 each coordinate heme b. Residues 176-202 (NEKLFFSLKNTTRPYHSLPSEAVFANS) are Lumenal-facing. A helical membrane pass occupies residues 203–223 (TGMLVVAFGLLVLYILLASSW). A heme b-binding site is contributed by lysine 224. Topologically, residues 224 to 242 (KRPEPGILTDRQPLLHDGE) are cytoplasmic.

Homodimer. It depends on heme b as a cofactor. N-glycosylated.

The protein resides in the late endosome membrane. The protein localises to the lysosome membrane. The catalysed reaction is Fe(3+)(out) + L-ascorbate(in) = monodehydro-L-ascorbate radical(in) + Fe(2+)(out) + H(+). Transmembrane reductase that uses ascorbate as an electron donor in the cytoplasm and transfers electrons across membranes to reduce iron cations Fe(3+) into Fe(2+) in the lumen of the late endosome and lysosome. Reduced iron can then be extruded from the late endosome and lysosome to the cytoplasm by divalent metal-specific transporters. It is therefore most probably involved in endosomal and lysosomal cellular iron homeostasis. This chain is Lysosomal membrane ascorbate-dependent ferrireductase CYB561A3, found in Homo sapiens (Human).